The primary structure comprises 850 residues: Serine/threonine-protein phosphatase 6 regulatory subunit 3-B (850 aa).

Disordered stretches follow at residues 610-652, 683-778, and 793-850; these read NISY…VNHE, SDGS…MKET, and KSEE…NGPV. Residues 627–638 show a composition bias toward acidic residues; sequence DSEESTDSEEEE. Composition is skewed to polar residues over residues 703–731 and 764–778; these read ASFS…TSTE and DQMT…MKET. Positions 826 to 839 are enriched in low complexity; it reads PSSSSQEQRISEQI.

This sequence belongs to the SAPS family.

Functionally, regulatory subunit of protein phosphatase 6 (PP6). May function as a scaffolding PP6 subunit. The polypeptide is Serine/threonine-protein phosphatase 6 regulatory subunit 3-B (ppp6r3-b) (Xenopus laevis (African clawed frog)).